Here is a 607-residue protein sequence, read N- to C-terminus: Chaperone protein DnaK (607 aa).

Thr-174 carries the post-translational modification Phosphothreonine; by autocatalysis. Positions 579 to 592 (AQAQAQQQAGANAG) are enriched in low complexity. The disordered stretch occupies residues 579–607 (AQAQAQQQAGANAGSDKKDEDVAEAEVVD).

This sequence belongs to the heat shock protein 70 family.

Acts as a chaperone. This Fusobacterium nucleatum subsp. nucleatum (strain ATCC 25586 / DSM 15643 / BCRC 10681 / CIP 101130 / JCM 8532 / KCTC 2640 / LMG 13131 / VPI 4355) protein is Chaperone protein DnaK.